The following is a 441-amino-acid chain: Putative collagenous domain-containing protein R238 (441 aa).

The Collagen-like domain occupies 164–199 (GCKGEKGIKGELGPKGNTGQKGDIGSKGDRGDKGEP). Residues 171–198 (IKGELGPKGNTGQKGDIGSKGDRGDKGE) form a disordered region. The span at 187–198 (IGSKGDRGDKGE) shows a compositional bias: basic and acidic residues.

This chain is Putative collagenous domain-containing protein R238, found in Acanthamoeba polyphaga (Amoeba).